A 251-amino-acid chain; its full sequence is CDP-diacylglycerol pyrophosphatase (251 aa).

Residues 4–24 traverse the membrane as a helical segment; it reads AGLLFLVMIVIAVVASGIGYW.

The protein belongs to the Cdh family.

Its subcellular location is the cell inner membrane. It catalyses the reaction a CDP-1,2-diacyl-sn-glycerol + H2O = a 1,2-diacyl-sn-glycero-3-phosphate + CMP + 2 H(+). Its pathway is phospholipid metabolism; CDP-diacylglycerol degradation; phosphatidate from CDP-diacylglycerol: step 1/1. This Escherichia coli O8 (strain IAI1) protein is CDP-diacylglycerol pyrophosphatase.